A 554-amino-acid chain; its full sequence is Potassium-transporting ATPase potassium-binding subunit (554 aa).

A run of 12 helical transmembrane segments spans residues 1–21 (MSSQVAGLLQLTALIAALALA), 59–79 (WPAYLRGVLAFSAMSVLFLYL), 131–151 (GLAVQNFLSAAVGMAVAVALV), 174–194 (VRILVPISVIGAIVLVAAGAI), 246–266 (PNPLSNLFEVFLILLIPFALT), 279–299 (GYAILGAMAVIWIGFTALMMW), 323–343 (FGIAGSSIFAVATTLTSTGAV), 352–372 (GFGGGITLLGMQLGEIAPGGV), 375–395 (GLYGMLIMAIIAVFIAGLMVG), 412–432 (FAACYILITPALVLGFTAVAM), 481–501 (IGIAMLLGRFLPMVFVLALAG), and 525–545 (GLLVGTILIITGLTYFPALAL).

It belongs to the KdpA family. The system is composed of three essential subunits: KdpA, KdpB and KdpC.

It localises to the cell membrane. Part of the high-affinity ATP-driven potassium transport (or Kdp) system, which catalyzes the hydrolysis of ATP coupled with the electrogenic transport of potassium into the cytoplasm. This subunit binds the extracellular potassium ions and delivers the ions to the membrane domain of KdpB through an intramembrane tunnel. The polypeptide is Potassium-transporting ATPase potassium-binding subunit (Streptomyces griseus subsp. griseus (strain JCM 4626 / CBS 651.72 / NBRC 13350 / KCC S-0626 / ISP 5235)).